The primary structure comprises 126 residues: Histone H2B type 1-N (126 aa).

Residues methionine 1–lysine 12 show a composition bias toward low complexity. Residues methionine 1–glutamate 36 are disordered. Proline 2 is modified (N-acetylproline). Glutamate 3 is subject to ADP-ribosyl glutamic acid. Lysine 6 is subject to N6-(2-hydroxyisobutyryl)lysine; alternate. Lysine 6 is subject to N6-(beta-hydroxybutyryl)lysine; alternate. Lysine 6 is subject to N6-acetyllysine; alternate. Lysine 6 is subject to N6-butyryllysine; alternate. Lysine 6 bears the N6-crotonyllysine; alternate mark. An N6-lactoyllysine; alternate modification is found at lysine 6. A Glycyl lysine isopeptide (Lys-Gly) (interchain with G-Cter in SUMO2); alternate cross-link involves residue lysine 6. An ADP-ribosylserine modification is found at serine 7. N6-(beta-hydroxybutyryl)lysine; alternate is present on lysine 12. N6-acetyllysine; alternate is present on residues lysine 12 and lysine 13. Lysine 12 and lysine 13 each carry N6-crotonyllysine; alternate. Lysine 12 bears the N6-lactoyllysine; alternate mark. Lysine 13 carries the N6-(2-hydroxyisobutyryl)lysine; alternate modification. The residue at position 15 (serine 15) is a Phosphoserine; by STK4/MST1. 4 positions are modified to N6-acetyllysine; alternate: lysine 16, lysine 17, lysine 21, and lysine 24. 4 positions are modified to N6-crotonyllysine; alternate: lysine 16, lysine 17, lysine 21, and lysine 24. 4 positions are modified to N6-lactoyllysine; alternate: lysine 16, lysine 17, lysine 21, and lysine 24. Lysine 17 carries the N6-glutaryllysine; alternate modification. N6-(2-hydroxyisobutyryl)lysine; alternate is present on residues lysine 21 and lysine 24. Position 21 is an N6-(beta-hydroxybutyryl)lysine; alternate (lysine 21). The residue at position 21 (lysine 21) is an N6-butyryllysine; alternate. Lysine 21 is covalently cross-linked (Glycyl lysine isopeptide (Lys-Gly) (interchain with G-Cter in SUMO2); alternate). Residue lysine 25 is modified to N6-(2-hydroxyisobutyryl)lysine. Lysine 35 is modified (N6-(2-hydroxyisobutyryl)lysine; alternate). Lysine 35 carries the post-translational modification N6-(beta-hydroxybutyryl)lysine; alternate. Position 35 is an N6-crotonyllysine; alternate (lysine 35). Lysine 35 carries the N6-glutaryllysine; alternate modification. At lysine 35 the chain carries N6-succinyllysine; alternate. Lysine 35 is covalently cross-linked (Glycyl lysine isopeptide (Lys-Gly) (interchain with G-Cter in ubiquitin); alternate). Position 36 is a polyADP-ribosyl glutamic acid (glutamate 36). Serine 37 is subject to Phosphoserine; by AMPK. Lysine 44, lysine 47, and lysine 58 each carry N6-(2-hydroxyisobutyryl)lysine; alternate. Lysine 44 is subject to N6-lactoyllysine; alternate. Lysine 44 and lysine 47 each carry N6-glutaryllysine; alternate. Residue lysine 47 is modified to N6-methyllysine; alternate. N6,N6-dimethyllysine; alternate is present on lysine 58. Dimethylated arginine is present on arginine 80. Residue lysine 86 is modified to N6-(2-hydroxyisobutyryl)lysine; alternate. An N6-acetyllysine; alternate modification is found at lysine 86. Lysine 86 carries the post-translational modification N6-lactoyllysine; alternate. Lysine 86 is modified (N6,N6,N6-trimethyllysine; alternate). Arginine 87 and arginine 93 each carry omega-N-methylarginine. At lysine 109 the chain carries N6-(2-hydroxyisobutyryl)lysine; alternate. Lysine 109 bears the N6-lactoyllysine; alternate mark. Position 109 is an N6-glutaryllysine; alternate (lysine 109). Residue lysine 109 is modified to N6-methyllysine; alternate. A glycan (O-linked (GlcNAc) serine) is linked at serine 113. Threonine 116 is subject to Phosphothreonine. N6-(2-hydroxyisobutyryl)lysine; alternate occurs at positions 117 and 121. At lysine 117 the chain carries N6-(beta-hydroxybutyryl)lysine; alternate. 2 positions are modified to N6-lactoyllysine; alternate: lysine 117 and lysine 121. Residues lysine 117 and lysine 121 each carry the N6-glutaryllysine; alternate modification. Lysine 117 and lysine 121 each carry N6-succinyllysine; alternate. Lysine 117 carries the post-translational modification N6-methylated lysine; alternate. Lysine 121 participates in a covalent cross-link: Glycyl lysine isopeptide (Lys-Gly) (interchain with G-Cter in ubiquitin); alternate.

This sequence belongs to the histone H2B family. The nucleosome is a histone octamer containing two molecules each of H2A, H2B, H3 and H4 assembled in one H3-H4 heterotetramer and two H2A-H2B heterodimers. The octamer wraps approximately 147 bp of DNA. Monoubiquitination at Lys-35 (H2BK34Ub) by the MSL1/MSL2 dimer is required for histone H3 'Lys-4' (H3K4me) and 'Lys-79' (H3K79me) methylation and transcription activation at specific gene loci, such as HOXA9 and MEIS1 loci. Similarly, monoubiquitination at Lys-121 (H2BK120Ub) by the RNF20/40 complex gives a specific tag for epigenetic transcriptional activation and is also prerequisite for histone H3 'Lys-4' and 'Lys-79' methylation. It also functions cooperatively with the FACT dimer to stimulate elongation by RNA polymerase II. H2BK120Ub also acts as a regulator of mRNA splicing: deubiquitination by USP49 is required for efficient cotranscriptional splicing of a large set of exons. Post-translationally, phosphorylated on Ser-15 (H2BS14ph) by STK4/MST1 during apoptosis; which facilitates apoptotic chromatin condensation. Also phosphorylated on Ser-15 in response to DNA double strand breaks (DSBs), and in correlation with somatic hypermutation and immunoglobulin class-switch recombination. Phosphorylation at Ser-37 (H2BS36ph) by AMPK in response to stress promotes transcription. In terms of processing, glcNAcylation at Ser-113 promotes monoubiquitination of Lys-121. It fluctuates in response to extracellular glucose, and associates with transcribed genes. ADP-ribosylated by PARP1 or PARP2 on Ser-7 (H2BS6ADPr) in response to DNA damage. H2BS6ADPr promotes recruitment of CHD1L. Mono-ADP-ribosylated on Glu-3 (H2BE2ADPr) by PARP3 in response to single-strand breaks. Poly ADP-ribosylation on Glu-36 (H2BE35ADPr) by PARP1 regulates adipogenesis: it inhibits phosphorylation at Ser-37 (H2BS36ph), thereby blocking expression of pro-adipogenetic genes. Post-translationally, crotonylation (Kcr) is specifically present in male germ cells and marks testis-specific genes in post-meiotic cells, including X-linked genes that escape sex chromosome inactivation in haploid cells. Crotonylation marks active promoters and enhancers and confers resistance to transcriptional repressors. It is also associated with post-meiotically activated genes on autosomes. In terms of processing, lactylated in macrophages by EP300/P300 by using lactoyl-CoA directly derived from endogenous or exogenous lactate, leading to stimulates gene transcription.

It is found in the nucleus. The protein resides in the chromosome. Core component of nucleosome. Nucleosomes wrap and compact DNA into chromatin, limiting DNA accessibility to the cellular machineries which require DNA as a template. Histones thereby play a central role in transcription regulation, DNA repair, DNA replication and chromosomal stability. DNA accessibility is regulated via a complex set of post-translational modifications of histones, also called histone code, and nucleosome remodeling. This chain is Histone H2B type 1-N (H2BC15), found in Bos taurus (Bovine).